The sequence spans 330 residues: tRNA-modifying protein YgfZ (330 aa).

The folate site is built by Trp-28 and Trp-190.

Belongs to the tRNA-modifying YgfZ family.

The protein resides in the cytoplasm. Its function is as follows. Folate-binding protein involved in regulating the level of ATP-DnaA and in the modification of some tRNAs. It is probably a key factor in regulatory networks that act via tRNA modification, such as initiation of chromosomal replication. The chain is tRNA-modifying protein YgfZ from Yersinia pestis bv. Antiqua (strain Antiqua).